A 501-amino-acid chain; its full sequence is Cytochrome P450 monooxygenase 76AD131 (501 aa).

Residues Met1–Leu21 traverse the membrane as a helical segment. 2 N-linked (GlcNAc...) asparagine glycosylation sites follow: Asn115 and Asn264. Cys444 contacts heme.

This sequence belongs to the cytochrome P450 family. Heme is required as a cofactor. In terms of tissue distribution, highly expressed in aerial parts, in both skin and flesh tissues.

It localises to the membrane. The enzyme catalyses tyramine + reduced [NADPH--hemoprotein reductase] + O2 = dopamine + oxidized [NADPH--hemoprotein reductase] + H2O + H(+). It catalyses the reaction 3-methoxytyramine + reduced [NADPH--hemoprotein reductase] + O2 = 3,4-dihydroxy-5-methoxyphenethylamine + oxidized [NADPH--hemoprotein reductase] + H2O + H(+). It functions in the pathway aromatic compound metabolism. It participates in alkaloid biosynthesis. In terms of biological role, cytochrome P450 monooxygenase participating in the biosynthesis of natural products derived from phenylethylamine, including mescaline, a natural hallucinogen potentially used in psychotherapeutic treatments. Catalyzes the hydroxylation of tyramine to dopamine and of 3-methoxytyramine to 3,4-dihydroxy-5-methoxyphenethylamine. The polypeptide is Cytochrome P450 monooxygenase 76AD131 (Lophophora williamsii (Peyote)).